Reading from the N-terminus, the 221-residue chain is CASP-like protein 2U10 (221 aa).

The interval 1-22 (MDSSSKPMNGSAGGSPVGDERK) is disordered. Residues 1-31 (MDSSSKPMNGSAGGSPVGDERKMGDHEHEFR) lie on the Cytoplasmic side of the membrane. A helical membrane pass occupies residues 32 to 52 (ISIILLRSFLLVLVIISEALM). At 53 to 91 (VTDRETGSVPLPFFGLPRPVFVTKTAKYELVTGLKFYVD) the chain is on the extracellular side. Residues 92 to 112 (ALGVVIGYTVLHLLFNIGLVA) form a helical membrane-spanning segment. The Cytoplasmic portion of the chain corresponds to 113–122 (TKGTVVDCKS). The chain crosses the membrane as a helical span at residues 123-143 (VAWISFIADSMMGYLLLSSAA). The Extracellular segment spans residues 144 to 174 (VATEIGYLAEEGAPAVLWRKVCNAFGYFCTV). The helical transmembrane segment at 175 to 195 (YAISVVICFIAALVSFVVVGI) threads the bilayer. Topologically, residues 196–221 (SAYHLFRLYGIQQQAAREKEKLSAEM) are cytoplasmic.

Belongs to the Casparian strip membrane proteins (CASP) family. As to quaternary structure, homodimer and heterodimers.

The protein resides in the cell membrane. In Selaginella moellendorffii (Spikemoss), this protein is CASP-like protein 2U10.